The following is a 486-amino-acid chain: Malonate-semialdehyde dehydrogenase (486 aa).

NAD(+)-binding residues include Phe154, Lys178, Glu181, Arg182, and Ser231. Cys286 serves as the catalytic Nucleophile. Glu386 is a binding site for NAD(+).

Belongs to the aldehyde dehydrogenase family. IolA subfamily. Homotetramer.

The enzyme catalyses 3-oxopropanoate + NAD(+) + CoA + H2O = hydrogencarbonate + acetyl-CoA + NADH + H(+). It catalyses the reaction 2-methyl-3-oxopropanoate + NAD(+) + CoA + H2O = propanoyl-CoA + hydrogencarbonate + NADH + H(+). The protein operates within polyol metabolism; myo-inositol degradation into acetyl-CoA; acetyl-CoA from myo-inositol: step 7/7. In terms of biological role, catalyzes the oxidation of malonate semialdehyde (MSA) and methylmalonate semialdehyde (MMSA) into acetyl-CoA and propanoyl-CoA, respectively. Is involved in a myo-inositol catabolic pathway. Bicarbonate, and not CO2, is the end-product of the enzymatic reaction. The sequence is that of Malonate-semialdehyde dehydrogenase from Bacillus cytotoxicus (strain DSM 22905 / CIP 110041 / 391-98 / NVH 391-98).